The following is a 406-amino-acid chain: Lymphocyte transmembrane adapter 1 (406 aa).

Positions methionine 1–glycine 25 are disordered. Topologically, residues methionine 1–histidine 33 are extracellular. A helical; Signal-anchor for type III membrane protein membrane pass occupies residues leucine 34–isoleucine 54. Topologically, residues leucine 55–valine 406 are cytoplasmic. The tract at residues glutamate 109–glutamine 131 is disordered. Tyrosine 184 is subject to Phosphotyrosine. A disordered region spans residues alanine 219–aspartate 258. Residues glycine 242–aspartate 258 are compositionally biased toward low complexity. Phosphotyrosine is present on residues tyrosine 259, tyrosine 285, and tyrosine 352. The disordered stretch occupies residues proline 358–valine 406.

As to quaternary structure, when phosphorylated, interacts with GRB2, PIK3R1 and GRAP2. Post-translationally, phosphorylated on tyrosines upon TCR or BCR activation; which leads to the recruitment of GRB2, PIK3R1 and GRAP2.

The protein localises to the cell membrane. Functionally, negatively regulates TCR (T-cell antigen receptor)-mediated signaling in T-cells and BCR (B-cell antigen receptor)-mediated signaling in B-cells. This is Lymphocyte transmembrane adapter 1 (Lax1) from Rattus norvegicus (Rat).